Consider the following 232-residue polypeptide: Orotidine 5'-phosphate decarboxylase (232 aa).

Substrate contacts are provided by residues Asp11, Lys33, 60–69, Thr120, Arg181, Gln190, Gly210, and Arg211; that span reads DLKFHDIPNT. Lys62 serves as the catalytic Proton donor.

This sequence belongs to the OMP decarboxylase family. Type 1 subfamily. Homodimer.

It carries out the reaction orotidine 5'-phosphate + H(+) = UMP + CO2. It participates in pyrimidine metabolism; UMP biosynthesis via de novo pathway; UMP from orotate: step 2/2. Functionally, catalyzes the decarboxylation of orotidine 5'-monophosphate (OMP) to uridine 5'-monophosphate (UMP). In Vibrio vulnificus (strain YJ016), this protein is Orotidine 5'-phosphate decarboxylase.